Consider the following 159-residue polypeptide: MKYRIISVGRIRESFYLEGVREYLKRLGPYTSIELIDGLEEKIGPRAGEKEIQAILQKEAEKIRRWLDKDEILVVLDLEGQVRSSEEMARQLEKWNASGKSRVTFLLGAAHGLANEIKQQAQETISLSRLTFPHQMAVLILAEQIYRGFKILKGEPYHR.

S-adenosyl-L-methionine is bound by residues L76, G108, and 127-132 (LSRLTF).

This sequence belongs to the RNA methyltransferase RlmH family. Homodimer.

The protein resides in the cytoplasm. The catalysed reaction is pseudouridine(1915) in 23S rRNA + S-adenosyl-L-methionine = N(3)-methylpseudouridine(1915) in 23S rRNA + S-adenosyl-L-homocysteine + H(+). In terms of biological role, specifically methylates the pseudouridine at position 1915 (m3Psi1915) in 23S rRNA. This is Ribosomal RNA large subunit methyltransferase H from Syntrophomonas wolfei subsp. wolfei (strain DSM 2245B / Goettingen).